The primary structure comprises 725 residues: Nitrogen regulatory protein areA (725 aa).

Disordered regions lie at residues 1–90, 429–464, and 479–524; these read MRLS…RTNS, NQGG…PRTA, and GSAS…PEPA. Positions 39–48 are enriched in basic and acidic residues; sequence PAEHSAHPSV. 2 stretches are compositionally biased toward polar residues: residues 442–452 and 479–500; these read ASVSEVRNQNQ and GSAS…SGLS. The segment at 525–549 adopts a GATA-type zinc-finger fold; the sequence is CTNCFTQTTPLWRRNPEGQPLCNAC. The disordered stretch occupies residues 574–714; that stretch reads RSSANTLTVG…NHSIAGGQGA (141 aa). Polar residues-rich tracts occupy residues 575–584 and 597–624; these read SSANTLTVGT and IQHA…SSTL. 2 stretches are compositionally biased toward low complexity: residues 631–656 and 678–704; these read PIAA…QVAP and KSAA…ANPA.

Its subcellular location is the nucleus. In terms of biological role, major nitrogen regulatory protein. In Penicillium chrysogenum (Penicillium notatum), this protein is Nitrogen regulatory protein areA (AREA).